Reading from the N-terminus, the 421-residue chain is Synaptotagmin-1 (421 aa).

The segment at Met1–Asp40 is disordered. The Vesicular portion of the chain corresponds to Met1 to Pro60. Residues Leu10 to Pro23 show a composition bias toward low complexity. N-linked (GlcNAc...) asparagine glycosylation occurs at Asn25. The helical transmembrane segment at Trp61 to Leu81 threads the bilayer. 5 S-palmitoyl cysteine lipidation sites follow: Cys77, Cys78, Cys80, Cys82, and Cys85. Over Cys82 to Lys421 the chain is Cytoplasmic. A disordered region spans residues Lys94–Val139. The span at Lys107 to Asp118 shows a compositional bias: basic and acidic residues. The segment covering Gln119–Lys133 has biased composition (acidic residues). A phospholipid binding region spans residues Glu135–Asn381. C2 domains are found at residues Lys141–Arg260 and Lys272–His405. 14 residues coordinate Ca(2+): Leu171, Asp172, Asp178, Asp230, Phe231, Asp232, Ser235, Lys236, Asp238, Asp303, Asp309, Asp363, Asp365, and Asp371.

The protein belongs to the synaptotagmin family. In terms of assembly, homotetramer. The cofactor is Ca(2+).

The protein resides in the cytoplasmic vesicle. The protein localises to the secretory vesicle membrane. Its subcellular location is the secretory vesicle. It is found in the synaptic vesicle membrane. It localises to the chromaffin granule membrane. The protein resides in the cytoplasm. Functionally, calcium sensor that participates in triggering neurotransmitter release at the synapse. May have a regulatory role in the membrane interactions during trafficking of synaptic vesicles at the active zone of the synapse. It binds acidic phospholipids with a specificity that requires the presence of both an acidic head group and a diacyl backbone. May play a role in dendrite formation by melanocytes. May play a role in regulating the secretion of hormones relevant to the reproduction and egg-laying of female geese. The protein is Synaptotagmin-1 of Anser cygnoides (Swan goose).